Consider the following 643-residue polypeptide: 1-deoxy-D-xylulose-5-phosphate synthase (643 aa).

Thiamine diphosphate-binding positions include His89 and 130 to 132; that span reads GHS. Asp161 is a Mg(2+) binding site. Thiamine diphosphate-binding positions include 162–163, Asn190, Phe297, and Glu380; that span reads GA. Mg(2+) is bound at residue Asn190.

It belongs to the transketolase family. DXPS subfamily. Homodimer. Mg(2+) is required as a cofactor. Requires thiamine diphosphate as cofactor.

The enzyme catalyses D-glyceraldehyde 3-phosphate + pyruvate + H(+) = 1-deoxy-D-xylulose 5-phosphate + CO2. It functions in the pathway metabolic intermediate biosynthesis; 1-deoxy-D-xylulose 5-phosphate biosynthesis; 1-deoxy-D-xylulose 5-phosphate from D-glyceraldehyde 3-phosphate and pyruvate: step 1/1. Its function is as follows. Catalyzes the acyloin condensation reaction between C atoms 2 and 3 of pyruvate and glyceraldehyde 3-phosphate to yield 1-deoxy-D-xylulose-5-phosphate (DXP). In Hahella chejuensis (strain KCTC 2396), this protein is 1-deoxy-D-xylulose-5-phosphate synthase.